Reading from the N-terminus, the 134-residue chain is UPF0412 protein YaaI (134 aa).

An N-terminal signal peptide occupies residues 1-23 (MKSVITISASLAISLMLCCTAQA).

Belongs to the UPF0412 family.

In Escherichia coli (strain UTI89 / UPEC), this protein is UPF0412 protein YaaI.